A 329-amino-acid chain; its full sequence is Chloroplast envelope quinone oxidoreductase homolog (329 aa).

Substrate is bound at residue Arg58.

Belongs to the zinc-containing alcohol dehydrogenase family. Quinone oxidoreductase subfamily. In terms of assembly, homodimer or homotetramer. Transition to monomer upon NADPH binding. Interacts with calmodulin. Interacts with HP30-1, HP30-2 and HP20.

Its subcellular location is the plastid. The protein resides in the chloroplast inner membrane. NADPH-dependent alpha,beta-unsaturated oxoene reductase reducing the double bond of medium-chain (C9) to long-chain (C18) reactive electrophile species deriving from poly-unsaturated fatty acid peroxides. The best substrates are 13-lipoxygenase-derived gamma-ketols, but is unable to reduce the double bond of short-chain alkenals and alkenones such as acrolein, crotonaldehyde, 3-buten-2-one, 4-hexen-3-one and trans-2-hexenal, or quinones such as duroquinone, decylubiquinone, coenzyme Q0, menadione, menaquinone and phylloquinone. Can use trans-2-nonenal, trans-3-decen-2-one, 4-hydroxynonenal, 12-oxo-10(E) dodecanoate (traumatin), 4-oxononenal, trans-1,3 diphenyl-2-propenone, trans-1,4-diphenyl-2-butene-1,4-dione, 9-oxo-12,13-epoxy-(10E)-octadecenoic acid (trans-EKODE-1b), 9-hydroxy-12-oxo-10(E)-octadecenoic acid, 9-Hydroxy-12-oxo-10(E),15(Z)-octadecadienoic acid and 9,13-dihydroxy-10-oxo-11-octadecenoic acid as substrates, but has no activity with 13(R,S)-hydroperoxy-9(Z),11(E)-octadecadienoic acid (13-HPOD), 9(S),12(S),13(S)-trihydroxy-10(E)-octadecenoic acid, 13-hydroxy-12-oxo-9(Z)-octadecenoic acid, 9-oxo-10(E),12(Z)-octadecadienoic acid (9-KODE), 13-oxo-9(Z),11(E)-octadecadienoic acid (13-KODE) and 12-oxo-10,15(Z)-phytodienoic acid (12-OPDA). This is Chloroplast envelope quinone oxidoreductase homolog from Arabidopsis thaliana (Mouse-ear cress).